Consider the following 418-residue polypeptide: MKHSSDICIVGAGISGLTCASHLLDSPACRGLSLRIFDMQQEAGGRIRSKMLDGKASIELGAGRYSPQLHPHFQSAMQHYSQKSEVYPFTQLKFKSHVQQKLKRAMNELSPRLKEHGKESFLQFVSRYQGHDSAVGMIRSMGYDALFLPDISAEMAYDIVGKHPEIQSVTDNDANQWFAAETGFAGLIQGIKAKVKAAGARFSLGYRLLSVRTDGDGYLLQLAGDDGWKLEHRTRHLILAIPPSAMAGLNVDFPEAWSGARYGSLPLFKGFLTYGEPWWLDYKLDDQVLIVDNPLRKIYFKGDKYLFFYTDSEMANYWRGCVAEGEDGYLEQIRTHLASALGIVRERIPQPLAHVHKYWAHGVEFCRDSDIDHPSALSHRDSGIIACSDAYTEHCGWMEGGLLSAREASRLLLQRIAA.

Gly13 contacts Mg(2+). An FAD-binding site is contributed by Ser15. Mg(2+) is bound at residue Gly16. Residues Asp38, Arg46, and Arg64 each coordinate FAD. Positions 64 and 163 each coordinate substrate. Residue Leu208 participates in FAD binding. Residue Ala240 coordinates Mg(2+). Tyr309 contacts substrate. FAD is bound at residue Met398.

This sequence belongs to the flavin monoamine oxidase family. In terms of assembly, homodimer. It depends on FAD as a cofactor. The cofactor is Mg(2+).

It catalyses the reaction L-tryptophan + O2 = 2-iminio-3-(indol-3-yl)propanoate + H2O2. It carries out the reaction 7-chloro-L-tryptophan + O2 = 3-(7-chloroindol-3-yl)-2-iminopropanoate + H2O2. It participates in pigment biosynthesis; violacein biosynthesis. The enzyme generates the imine form of indole 3-pyruvate (IPA) from L-tryptophan (L-Trp), with concomitant two-electron reduction of O(2) to H(2)O(2). This is Flavin-dependent L-tryptophan oxidase VioA (vioA) from Chromobacterium violaceum (strain ATCC 12472 / DSM 30191 / JCM 1249 / CCUG 213 / NBRC 12614 / NCIMB 9131 / NCTC 9757 / MK).